Here is a 391-residue protein sequence, read N- to C-terminus: Adaptive-response sensory kinase SasA (391 aa).

Residues 169–391 (MLAHDLRSPL…CFHFTLPVCR (223 aa)) form the Histidine kinase domain. H172 carries the phosphohistidine; by autocatalysis modification.

As to quaternary structure, homooligomerizes. Interacts with KaiC. Participates in the KaiABC clock complex, whose core is composed of a KaiC homohexamer, 6 KaiB and up to 6 KaiA dimers. SasA and KaiB(fs) compete to bind to KaiC.

The enzyme catalyses ATP + protein L-histidine = ADP + protein N-phospho-L-histidine.. Its function is as follows. Member of the two-component regulatory system SasA/RpaA involved in genome-wide circadian gene expression. One of several clock output pathways. Participates in the Kai clock protein complex, the main circadian regulator in cyanobacteria, via its interaction with KaiC. KaiC enhances the autophosphorylation activity of SasA, which then transfers its phosphate group to RpaA to activate it. In addition to its output function, recruits fold-shifted KaiB (KaiB(fs)) to KaiC to cooperatively form the KaiB(6):KaiC(6) complex (independent of SasA kinase activity). Required for robustness of the circadian rhythm of gene expression and is involved in clock output, also required for adaptation to light/dark cycles. This Rippkaea orientalis (strain PCC 8801 / RF-1) (Cyanothece sp. (strain PCC 8801)) protein is Adaptive-response sensory kinase SasA.